A 246-amino-acid chain; its full sequence is DNA repair protein RecO (246 aa).

It belongs to the RecO family.

Involved in DNA repair and RecF pathway recombination. The protein is DNA repair protein RecO of Nitrosococcus oceani (strain ATCC 19707 / BCRC 17464 / JCM 30415 / NCIMB 11848 / C-107).